The following is a 235-amino-acid chain: Uridylate kinase (235 aa).

An ATP-binding site is contributed by 12 to 15; it reads KISG. Residue Gly54 participates in UMP binding. Residues Gly55 and Arg59 each contribute to the ATP site. Residues Asp72 and 133–140 contribute to the UMP site; that span reads TGNPFFST. Positions 166 and 169 each coordinate ATP.

It belongs to the UMP kinase family. In terms of assembly, homohexamer.

It localises to the cytoplasm. The catalysed reaction is UMP + ATP = UDP + ADP. The protein operates within pyrimidine metabolism; CTP biosynthesis via de novo pathway; UDP from UMP (UMPK route): step 1/1. With respect to regulation, inhibited by UTP. In terms of biological role, catalyzes the reversible phosphorylation of UMP to UDP. The protein is Uridylate kinase of Acetivibrio thermocellus (strain ATCC 27405 / DSM 1237 / JCM 9322 / NBRC 103400 / NCIMB 10682 / NRRL B-4536 / VPI 7372) (Clostridium thermocellum).